The chain runs to 299 residues: Leucine zipper transcription factor-like protein 1 (299 aa).

Residues 96-299 (LKLQTDISEL…KRLAKYESED (204 aa)) adopt a coiled-coil conformation. Positions 145 to 299 (GTTELLNKEI…KRLAKYESED (155 aa)) are interaction with BSS9.

This sequence belongs to the LZTFL1 family. Self-associates. Interacts with BBS9; the interaction mediates the association of LZTL1 with the BBsome complex and regulates BBSome ciliary trafficking. Highly expressed in testis. Expressed in brain, cerebellum, eye, heart, kidney, liver, lung and trachea. In small intestine, graded expression along the crypt-villus axis with high levels in the villus apex and lower levels in the crypt stem cells (at protein level). Not expressed in skeletal muscle and white adipose tissue.

The protein localises to the cytoplasm. Functionally, regulates ciliary localization of the BBSome complex. Together with the BBSome complex, controls SMO ciliary trafficking and contributes to the sonic hedgehog (SHH) pathway regulation. May play a role in neurite outgrowth. May have tumor suppressor function. The chain is Leucine zipper transcription factor-like protein 1 (Lztfl1) from Mus musculus (Mouse).